Consider the following 354-residue polypeptide: tRNA-specific 2-thiouridylase MnmA (354 aa).

Residues 6–13 (LLSGGVDS) and Leu33 contribute to the ATP site. Catalysis depends on Cys100, which acts as the Nucleophile. An intrachain disulfide couples Cys100 to Cys195. Residue Gly123 participates in ATP binding. The interaction with tRNA stretch occupies residues 145–147 (KDQ). Cys195 functions as the Cysteine persulfide intermediate in the catalytic mechanism.

Belongs to the MnmA/TRMU family.

It is found in the cytoplasm. It catalyses the reaction S-sulfanyl-L-cysteinyl-[protein] + uridine(34) in tRNA + AH2 + ATP = 2-thiouridine(34) in tRNA + L-cysteinyl-[protein] + A + AMP + diphosphate + H(+). Functionally, catalyzes the 2-thiolation of uridine at the wobble position (U34) of tRNA, leading to the formation of s(2)U34. This Borrelia turicatae (strain 91E135) protein is tRNA-specific 2-thiouridylase MnmA.